Consider the following 72-residue polypeptide: Translation initiation factor IF-1 (72 aa).

The 72-residue stretch at 1-72 (MAKDDVIEVE…TRGRITYRYK (72 aa)) folds into the S1-like domain. Tyr-60 bears the Phosphotyrosine mark.

This sequence belongs to the IF-1 family. As to quaternary structure, component of the 30S ribosomal translation pre-initiation complex which assembles on the 30S ribosome in the order IF-2 and IF-3, IF-1 and N-formylmethionyl-tRNA(fMet); mRNA recruitment can occur at any time during PIC assembly.

The protein localises to the cytoplasm. Functionally, one of the essential components for the initiation of protein synthesis. Stabilizes the binding of IF-2 and IF-3 on the 30S subunit to which N-formylmethionyl-tRNA(fMet) subsequently binds. Helps modulate mRNA selection, yielding the 30S pre-initiation complex (PIC). Upon addition of the 50S ribosomal subunit IF-1, IF-2 and IF-3 are released leaving the mature 70S translation initiation complex. This chain is Translation initiation factor IF-1, found in Oceanobacillus iheyensis (strain DSM 14371 / CIP 107618 / JCM 11309 / KCTC 3954 / HTE831).